The chain runs to 356 residues: S-adenosylmethionine:tRNA ribosyltransferase-isomerase (356 aa).

It belongs to the QueA family. Monomer.

It localises to the cytoplasm. The catalysed reaction is 7-aminomethyl-7-carbaguanosine(34) in tRNA + S-adenosyl-L-methionine = epoxyqueuosine(34) in tRNA + adenine + L-methionine + 2 H(+). It functions in the pathway tRNA modification; tRNA-queuosine biosynthesis. Its function is as follows. Transfers and isomerizes the ribose moiety from AdoMet to the 7-aminomethyl group of 7-deazaguanine (preQ1-tRNA) to give epoxyqueuosine (oQ-tRNA). This chain is S-adenosylmethionine:tRNA ribosyltransferase-isomerase, found in Shigella dysenteriae serotype 1 (strain Sd197).